The chain runs to 614 residues: MQNCTNSPEDQAASVCPPPPQFPGDDTRPTSKKELAGWYSYGWAAEVFTVCAMGSFLPITLEQMARERGVLLSDKKTPCSATWSSLESTSPSGTWNTIFDATAFTKPGSPRTSQCIIYILGVEINTASFAMYTFSLSVFIQAILIISMSGAADHGSYRKMLLVIFALIGSVSTMLFLAVVPRLYLLGGLFAIISNTCFGASFVLLNSFLPLLVRYHPILMGGHGDGDIPTGTSHDSTSTADGPGQTDGTETTSLLRPEQNRNAYSLGDETQVFASKTSQELKLSTKLSSNGIGIGYIGAVILQAICILVVVETHQTTFSLRLVLFLIGLWWFTFTIPAAMWLRARPGPPLPYGKESGTWTSYMAYAWKSLGRTVMRTRHLRDILLFLAAWFLLSDGIATVSGTAVLFAKTQLGMQPAALGLINVIAMIAGVFGAFSWSFVSRTFNLRASQTIVACIILFELVPLYGLLGFIPAIKSLGYLGLQQPWEMYPLGVIYGLVMGGLSSYCRSFFGELIPPGYEAAFYALYAITDKGSSVFGPAIVGIITDRYGEIRPAFVFLAVLILLPLPLMLLVDVERGKRDALSLSKELKGRPRQEVPVYGAVTHCPSHSENLAE.

Positions 1–29 (MQNCTNSPEDQAASVCPPPPQFPGDDTRP) are disordered. The N-linked (GlcNAc...) asparagine glycan is linked to Asn3. A run of 4 helical transmembrane segments spans residues 41–61 (YGWA…PITL), 126–146 (TASF…ILII), 160–180 (MLLV…LAVV), and 185–205 (LLGG…FVLL). Residues 229-254 (PTGTSHDSTSTADGPGQTDGTETTSL) form a disordered region. Positions 230-254 (TGTSHDSTSTADGPGQTDGTETTSL) are enriched in polar residues. Helical transmembrane passes span 291 to 311 (GIGI…LVVV), 322 to 342 (LVLF…AMWL), 383 to 403 (ILLF…VSGT), 417 to 437 (AALG…AFSW), 452 to 472 (IVAC…GFIP), 486 to 506 (WEMY…SSYC), 523 to 545 (YALY…GIIT), and 554 to 574 (AFVF…LVDV).

This sequence belongs to the ATG22 family.

Its subcellular location is the vacuole membrane. Functionally, vacuolar effluxer which mediate the efflux of amino acids resulting from autophagic degradation. The release of autophagic amino acids allows the maintenance of protein synthesis and viability during nitrogen starvation. This is Autophagy-related protein 22-1 (atg22-1) from Aspergillus niger (strain ATCC MYA-4892 / CBS 513.88 / FGSC A1513).